A 629-amino-acid polypeptide reads, in one-letter code: tRNA uridine 5-carboxymethylaminomethyl modification enzyme MnmG (629 aa).

FAD contacts are provided by residues 13–18 (GGGHAG), Val-125, and Ser-180. Position 273–287 (273–287 (GPRYCPSIEDKVMRF)) interacts with NAD(+). FAD is bound at residue Gln-370.

The protein belongs to the MnmG family. As to quaternary structure, homodimer. Heterotetramer of two MnmE and two MnmG subunits. FAD is required as a cofactor.

Its subcellular location is the cytoplasm. NAD-binding protein involved in the addition of a carboxymethylaminomethyl (cmnm) group at the wobble position (U34) of certain tRNAs, forming tRNA-cmnm(5)s(2)U34. The protein is tRNA uridine 5-carboxymethylaminomethyl modification enzyme MnmG of Enterobacter sp. (strain 638).